Consider the following 508-residue polypeptide: Lysine--tRNA ligase (508 aa).

Mg(2+) contacts are provided by glutamate 416 and glutamate 423.

Belongs to the class-II aminoacyl-tRNA synthetase family. Homodimer. Mg(2+) serves as cofactor.

Its subcellular location is the cytoplasm. The catalysed reaction is tRNA(Lys) + L-lysine + ATP = L-lysyl-tRNA(Lys) + AMP + diphosphate. This is Lysine--tRNA ligase from Prochlorococcus marinus (strain MIT 9313).